Reading from the N-terminus, the 82-residue chain is Cell division topological specificity factor (82 aa).

It belongs to the MinE family.

Prevents the cell division inhibition by proteins MinC and MinD at internal division sites while permitting inhibition at polar sites. This ensures cell division at the proper site by restricting the formation of a division septum at the midpoint of the long axis of the cell. In Buchnera aphidicola subsp. Cinara cedri (strain Cc), this protein is Cell division topological specificity factor.